Consider the following 132-residue polypeptide: Small ribosomal subunit protein uS11 (132 aa).

It belongs to the universal ribosomal protein uS11 family. As to quaternary structure, part of the 30S ribosomal subunit. Interacts with proteins S7 and S18. Binds to IF-3.

Functionally, located on the platform of the 30S subunit, it bridges several disparate RNA helices of the 16S rRNA. Forms part of the Shine-Dalgarno cleft in the 70S ribosome. This Lachnoclostridium phytofermentans (strain ATCC 700394 / DSM 18823 / ISDg) (Clostridium phytofermentans) protein is Small ribosomal subunit protein uS11.